The sequence spans 409 residues: Histidine--tRNA ligase (409 aa).

It belongs to the class-II aminoacyl-tRNA synthetase family. Homodimer.

It is found in the cytoplasm. The enzyme catalyses tRNA(His) + L-histidine + ATP = L-histidyl-tRNA(His) + AMP + diphosphate + H(+). The protein is Histidine--tRNA ligase of Campylobacter fetus subsp. fetus (strain 82-40).